A 198-amino-acid polypeptide reads, in one-letter code: MQTVARKASVERVTNETTIALTLTIEGEGNVRVTTGFGMLDHMLTLTAFWAGFDLDLTCNGDMHIDAHHTAEDVALCLGQALATALDDRKGIARVGFARVPMDEALAEVTLDISGRPWLEWRGDEYLPPVIAGEEKDLWREFHKAFASAARMNLHVSYLYGKNGHHLLESASKGLGLALRQAVRRDRQTVLSTKGSLD.

The protein belongs to the imidazoleglycerol-phosphate dehydratase family.

The protein resides in the cytoplasm. It catalyses the reaction D-erythro-1-(imidazol-4-yl)glycerol 3-phosphate = 3-(imidazol-4-yl)-2-oxopropyl phosphate + H2O. It functions in the pathway amino-acid biosynthesis; L-histidine biosynthesis; L-histidine from 5-phospho-alpha-D-ribose 1-diphosphate: step 6/9. This Nitratidesulfovibrio vulgaris (strain DP4) (Desulfovibrio vulgaris) protein is Imidazoleglycerol-phosphate dehydratase.